Consider the following 78-residue polypeptide: Small ribosomal subunit protein bS18 (78 aa).

Belongs to the bacterial ribosomal protein bS18 family. In terms of assembly, part of the 30S ribosomal subunit. Forms a tight heterodimer with protein bS6.

Functionally, binds as a heterodimer with protein bS6 to the central domain of the 16S rRNA, where it helps stabilize the platform of the 30S subunit. The sequence is that of Small ribosomal subunit protein bS18 from Rhodospirillum rubrum (strain ATCC 11170 / ATH 1.1.1 / DSM 467 / LMG 4362 / NCIMB 8255 / S1).